The primary structure comprises 417 residues: Serine hydroxymethyltransferase (417 aa).

Residues Leu-121 and 125–127 (GHL) contribute to the (6S)-5,6,7,8-tetrahydrofolate site. Lys-229 bears the N6-(pyridoxal phosphate)lysine mark. A (6S)-5,6,7,8-tetrahydrofolate-binding site is contributed by 355–357 (SPF).

This sequence belongs to the SHMT family. In terms of assembly, homodimer. It depends on pyridoxal 5'-phosphate as a cofactor.

It is found in the cytoplasm. The enzyme catalyses (6R)-5,10-methylene-5,6,7,8-tetrahydrofolate + glycine + H2O = (6S)-5,6,7,8-tetrahydrofolate + L-serine. Its pathway is one-carbon metabolism; tetrahydrofolate interconversion. It participates in amino-acid biosynthesis; glycine biosynthesis; glycine from L-serine: step 1/1. In terms of biological role, catalyzes the reversible interconversion of serine and glycine with tetrahydrofolate (THF) serving as the one-carbon carrier. This reaction serves as the major source of one-carbon groups required for the biosynthesis of purines, thymidylate, methionine, and other important biomolecules. Also exhibits THF-independent aldolase activity toward beta-hydroxyamino acids, producing glycine and aldehydes, via a retro-aldol mechanism. This chain is Serine hydroxymethyltransferase, found in Shewanella putrefaciens (strain CN-32 / ATCC BAA-453).